The chain runs to 1184 residues: Non-receptor tyrosine-protein kinase TYK2 (1184 aa).

The region spanning 33–430 is the FERM domain; sequence LMVLLHWPGP…GYFRLTADSS (398 aa). The disordered stretch occupies residues 294-368; that stretch reads CYIQNSGQTA…KAGEHLTESP (75 aa). Tyrosine 295 carries the phosphotyrosine modification. Residues 449 to 529 form the SH2; atypical domain; sequence GIHGPLMDPF…GRSFASLGDL (81 aa). The residue at position 525 (serine 525) is a Phosphoserine. Residues 589 to 866 form the Protein kinase 1 domain; the sequence is ITQLSHLGQG…RTILRDLTRL (278 aa). The residue at position 604 (tyrosine 604) is a Phosphotyrosine. Serine 881 bears the Phosphoserine mark. A Protein kinase 2 domain is found at 894–1166; it reads LKKIRDLGEG…PTFQNLVPIL (273 aa). Residues 900 to 908 and lysine 927 each bind ATP; that span reads LGEGHFGKV. Aspartate 1020 (proton acceptor) is an active-site residue. Tyrosine 1051 is modified (phosphotyrosine; by autocatalysis). A Phosphotyrosine modification is found at tyrosine 1052.

This sequence belongs to the protein kinase superfamily. Tyr protein kinase family. JAK subfamily. In terms of assembly, interacts (via FERM domain) with JAKMIP1. Interacts with PIK3R1; this interaction is important for cell migration. Interacts with MPL/TPOR. In terms of processing, phosphorylation by JAK1 at Tyr-1051 and Tyr-1052 induces kinase activation.

It catalyses the reaction L-tyrosyl-[protein] + ATP = O-phospho-L-tyrosyl-[protein] + ADP + H(+). The protein kinase 1 domain (also termed pseudokinase domain) mediates autoinhibition of the TYK2 kinase domain. In terms of biological role, tyrosine kinase of the non-receptor type involved in numerous cytokines and interferons signaling, which regulates cell growth, development, cell migration, innate and adaptive immunity. Plays both structural and catalytic roles in numerous interleukins and interferons (IFN-alpha/beta) signaling. Associates with heterodimeric cytokine receptor complexes and activates STAT family members including STAT1, STAT3, STAT4 or STAT6. The heterodimeric cytokine receptor complexes are composed of (1) a TYK2-associated receptor chain (IFNAR1, IL12RB1, IL10RB or IL13RA1), and (2) a second receptor chain associated either with JAK1 or JAK2. In response to cytokine-binding to receptors, phosphorylates and activates receptors (IFNAR1, IL12RB1, IL10RB or IL13RA1), creating docking sites for STAT members. In turn, recruited STATs are phosphorylated by TYK2 (or JAK1/JAK2 on the second receptor chain), form homo- and heterodimers, translocate to the nucleus, and regulate cytokine/growth factor responsive genes. Negatively regulates STAT3 activity by promototing phosphorylation at a specific tyrosine that differs from the site used for signaling. This chain is Non-receptor tyrosine-protein kinase TYK2, found in Mus musculus (Mouse).